A 188-amino-acid polypeptide reads, in one-letter code: Elongation factor P (188 aa).

The protein belongs to the elongation factor P family.

The protein resides in the cytoplasm. It participates in protein biosynthesis; polypeptide chain elongation. Functionally, involved in peptide bond synthesis. Stimulates efficient translation and peptide-bond synthesis on native or reconstituted 70S ribosomes in vitro. Probably functions indirectly by altering the affinity of the ribosome for aminoacyl-tRNA, thus increasing their reactivity as acceptors for peptidyl transferase. The polypeptide is Elongation factor P (Chlorobium phaeobacteroides (strain DSM 266 / SMG 266 / 2430)).